Here is a 119-residue protein sequence, read N- to C-terminus: Ribonuclease P protein component (119 aa).

It belongs to the RnpA family. Consists of a catalytic RNA component (M1 or rnpB) and a protein subunit.

The enzyme catalyses Endonucleolytic cleavage of RNA, removing 5'-extranucleotides from tRNA precursor.. Its function is as follows. RNaseP catalyzes the removal of the 5'-leader sequence from pre-tRNA to produce the mature 5'-terminus. It can also cleave other RNA substrates such as 4.5S RNA. The protein component plays an auxiliary but essential role in vivo by binding to the 5'-leader sequence and broadening the substrate specificity of the ribozyme. In Chlamydia muridarum (strain MoPn / Nigg), this protein is Ribonuclease P protein component.